The sequence spans 255 residues: Small ribosomal subunit protein eS1B (255 aa).

The residue at position 2 (alanine 2) is an N-acetylalanine; partial. Serine 245 is subject to Phosphoserine. Lysine 248 is covalently cross-linked (Glycyl lysine isopeptide (Lys-Gly) (interchain with G-Cter in ubiquitin)). Threonine 254 carries the post-translational modification Phosphothreonine.

The protein belongs to the eukaryotic ribosomal protein eS1 family. Component of the small ribosomal subunit. Mature ribosomes consist of a small (40S) and a large (60S) subunit. The 40S subunit contains about 33 different proteins and 1 molecule of RNA (18S). The 60S subunit contains about 49 different proteins and 3 molecules of RNA (25S, 5.8S and 5S).

It localises to the cytoplasm. This is Small ribosomal subunit protein eS1B from Saccharomyces cerevisiae (strain RM11-1a) (Baker's yeast).